We begin with the raw amino-acid sequence, 432 residues long: Glutamyl-tRNA reductase (432 aa).

Substrate contacts are provided by residues 49–52 (TCNR), Ser109, 114–116 (EGQ), and Gln120. Cys50 (nucleophile) is an active-site residue. 189–194 (GAGKMS) is an NADP(+) binding site.

The protein belongs to the glutamyl-tRNA reductase family. Homodimer.

It catalyses the reaction (S)-4-amino-5-oxopentanoate + tRNA(Glu) + NADP(+) = L-glutamyl-tRNA(Glu) + NADPH + H(+). Its pathway is porphyrin-containing compound metabolism; protoporphyrin-IX biosynthesis; 5-aminolevulinate from L-glutamyl-tRNA(Glu): step 1/2. It functions in the pathway porphyrin-containing compound metabolism; chlorophyll biosynthesis. Functionally, catalyzes the NADPH-dependent reduction of glutamyl-tRNA(Glu) to glutamate 1-semialdehyde (GSA). The protein is Glutamyl-tRNA reductase of Cyanothece sp. (strain PCC 7425 / ATCC 29141).